The primary structure comprises 491 residues: MTTWDKCLKKIKKNLSTFEYKTWIKPIHVEQNSNLFTVYCNNEYFKKHIKSKYGNLILSTIQECHGNDLIIEYSNKKFSGEKITEVITAGPQANFFSTTSVEIKDESEDTKVVQEPKILKKSNSKDFSSSQELFGFDEAMLITAKEDEEYSFGLPLKEKYVFDSFVVGDANKIARAAAMQVSINPGKLHNPLFIYGGSGLGKTHLMQAIGNHAREVNPNAKIIYTNSEQFIKDYVNSIRLQDQDEFQRVYRSADILLIDDIQFIAGKEGTAQEFFHTFNALYENGKQIILTSDKYPNEIEGLEERLVSRFGYGLTVSVDMPDLETRIAILLKKAHDLGQKLPNETAAFIAENVRTNVRELEGALNRVLTTSKFNHKDPTIEVAQACLRDVIKIQEKKVKIDNIQKVVADFYRIRVKDLTSNQRSRNIARPRQIAMSLARELTSHSLPEIGNAFGGRDHTTVMHAVKAITKLRQSNTSISDDYELLLDKISR.

The segment at 1–69 (MTTWDKCLKK…TIQECHGNDL (69 aa)) is domain I, interacts with DnaA modulators. The interval 69–154 (LIIEYSNKKF…KEDEEYSFGL (86 aa)) is domain II. Residues 155–371 (PLKEKYVFDS…GALNRVLTTS (217 aa)) form a domain III, AAA+ region region. The ATP site is built by Gly199, Gly201, Lys202, and Thr203. Residues 372–491 (KFNHKDPTIE…YELLLDKISR (120 aa)) are domain IV, binds dsDNA.

It belongs to the DnaA family. Oligomerizes as a right-handed, spiral filament on DNA at oriC.

It is found in the cytoplasm. Plays an essential role in the initiation and regulation of chromosomal replication. ATP-DnaA binds to the origin of replication (oriC) to initiate formation of the DNA replication initiation complex once per cell cycle. Binds the DnaA box (a 9 base pair repeat at the origin) and separates the double-stranded (ds)DNA. Forms a right-handed helical filament on oriC DNA; dsDNA binds to the exterior of the filament while single-stranded (ss)DNA is stabiized in the filament's interior. The ATP-DnaA-oriC complex binds and stabilizes one strand of the AT-rich DNA unwinding element (DUE), permitting loading of DNA polymerase. After initiation quickly degrades to an ADP-DnaA complex that is not apt for DNA replication. Binds acidic phospholipids. In Francisella tularensis subsp. holarctica (strain LVS), this protein is Chromosomal replication initiator protein DnaA.